Here is a 103-residue protein sequence, read N- to C-terminus: Omega toxin Ap5 (103 aa).

A signal peptide spans 1 to 22 (MNTIQVILFAVVLVLTVTVGQA). Positions 23–57 (DEDSAETSLLRKLEEAEASMFGQYLEESKNSREKR) are excised as a propeptide. 3 disulfide bridges follow: Cys58–Cys73, Cys65–Cys78, and Cys72–Cys93.

This sequence belongs to the neurotoxin 14 (magi-1) family. 08 (Ltx-4) subfamily. As to expression, expressed by the venom duct.

The protein resides in the secreted. Shows a weak inhibition on the voltage-gated calcium channel Cav2.1/CACNA1A and some voltage-gated sodium channels (with 1 uM toxin tested: 22.08% inhibition on Cav2.1/CACNA1A, 6.6% on Nav1.1/SCN1A, 4.2% on Nav1.5, and 16% on Nav1.7). Functionally, shows a weak inhibition on the voltage-gated calcium channel Cav2.1/CACNA1A (28.06% at 1 uM). The sequence is that of Omega toxin Ap5 from Acanthoscurria paulensis (Brazilian giant black tarantula spider).